Consider the following 467-residue polypeptide: Trigger factor (467 aa).

The PPIase FKBP-type domain maps to 162–243; that stretch reads GDFVSIDLSA…LNSVKERHLP (82 aa). Acidic residues predominate over residues 426–435; sequence EEGNELDLDE. A disordered region spans residues 426 to 467; that stretch reads EEGNELDLDELFGTQAGEEQGEQAEGTEATDEQSAKADAKAE. Over residues 436-452 the composition is skewed to low complexity; that stretch reads LFGTQAGEEQGEQAEGT. A compositionally biased stretch (basic and acidic residues) spans 458–467; sequence QSAKADAKAE.

The protein belongs to the FKBP-type PPIase family. Tig subfamily.

It localises to the cytoplasm. It carries out the reaction [protein]-peptidylproline (omega=180) = [protein]-peptidylproline (omega=0). In terms of biological role, involved in protein export. Acts as a chaperone by maintaining the newly synthesized protein in an open conformation. Functions as a peptidyl-prolyl cis-trans isomerase. This chain is Trigger factor, found in Saccharopolyspora erythraea (strain ATCC 11635 / DSM 40517 / JCM 4748 / NBRC 13426 / NCIMB 8594 / NRRL 2338).